A 368-amino-acid polypeptide reads, in one-letter code: Spermidine/putrescine import ATP-binding protein PotA (368 aa).

One can recognise an ABC transporter domain in the interval 6 to 236 (VSIKNVSKFF…PVNVFAATFI (231 aa)). 38–45 (GPSGCGKT) is a binding site for ATP.

Belongs to the ABC transporter superfamily. Spermidine/putrescine importer (TC 3.A.1.11.1) family. As to quaternary structure, the complex is composed of two ATP-binding proteins (PotA), two transmembrane proteins (PotB and PotC) and a solute-binding protein (PotD).

It is found in the cell inner membrane. The catalysed reaction is ATP + H2O + polyamine-[polyamine-binding protein]Side 1 = ADP + phosphate + polyamineSide 2 + [polyamine-binding protein]Side 1.. Functionally, part of the ABC transporter complex PotABCD involved in spermidine/putrescine import. Responsible for energy coupling to the transport system. In Thermotoga maritima (strain ATCC 43589 / DSM 3109 / JCM 10099 / NBRC 100826 / MSB8), this protein is Spermidine/putrescine import ATP-binding protein PotA.